A 201-amino-acid chain; its full sequence is Imidazoleglycerol-phosphate dehydratase (201 aa).

Belongs to the imidazoleglycerol-phosphate dehydratase family.

The protein localises to the cytoplasm. It carries out the reaction D-erythro-1-(imidazol-4-yl)glycerol 3-phosphate = 3-(imidazol-4-yl)-2-oxopropyl phosphate + H2O. The protein operates within amino-acid biosynthesis; L-histidine biosynthesis; L-histidine from 5-phospho-alpha-D-ribose 1-diphosphate: step 6/9. This is Imidazoleglycerol-phosphate dehydratase from Prochlorococcus marinus subsp. pastoris (strain CCMP1986 / NIES-2087 / MED4).